A 360-amino-acid chain; its full sequence is Nicotinate-nucleotide--dimethylbenzimidazole phosphoribosyltransferase (360 aa).

Glutamate 327 (proton acceptor) is an active-site residue.

It belongs to the CobT family.

The catalysed reaction is 5,6-dimethylbenzimidazole + nicotinate beta-D-ribonucleotide = alpha-ribazole 5'-phosphate + nicotinate + H(+). The protein operates within nucleoside biosynthesis; alpha-ribazole biosynthesis; alpha-ribazole from 5,6-dimethylbenzimidazole: step 1/2. In terms of biological role, catalyzes the synthesis of alpha-ribazole-5'-phosphate from nicotinate mononucleotide (NAMN) and 5,6-dimethylbenzimidazole (DMB). The chain is Nicotinate-nucleotide--dimethylbenzimidazole phosphoribosyltransferase from Shewanella baltica (strain OS185).